A 525-amino-acid chain; its full sequence is GMP synthase [glutamine-hydrolyzing] (525 aa).

In terms of domain architecture, Glutamine amidotransferase type-1 spans 9 to 207; sequence RILILDFGSQ…VRDICQCEAL (199 aa). Residue Cys86 is the Nucleophile of the active site. Active-site residues include His181 and Glu183. The GMPS ATP-PPase domain maps to 208 to 400; sequence WTPAKIIDDA…LGLPYDMLYR (193 aa). An ATP-binding site is contributed by 235–241; that stretch reads SGGVDSS.

In terms of assembly, homodimer.

It carries out the reaction XMP + L-glutamine + ATP + H2O = GMP + L-glutamate + AMP + diphosphate + 2 H(+). Its pathway is purine metabolism; GMP biosynthesis; GMP from XMP (L-Gln route): step 1/1. Catalyzes the synthesis of GMP from XMP. The sequence is that of GMP synthase [glutamine-hydrolyzing] from Klebsiella pneumoniae (strain 342).